Reading from the N-terminus, the 336-residue chain is Ornithine carbamoyltransferase, catabolic (336 aa).

Carbamoyl phosphate contacts are provided by residues 57-60 (STRT), Gln-84, Arg-108, and 135-138 (HPTQ). L-ornithine contacts are provided by residues Asn-168, Asp-232, and 236-237 (SM). Carbamoyl phosphate-binding positions include 274 to 275 (CL) and Arg-321.

The protein belongs to the aspartate/ornithine carbamoyltransferase superfamily. OTCase family.

It localises to the cytoplasm. The enzyme catalyses carbamoyl phosphate + L-ornithine = L-citrulline + phosphate + H(+). The protein operates within amino-acid degradation; L-arginine degradation via ADI pathway; carbamoyl phosphate from L-arginine: step 2/2. Its function is as follows. Reversibly catalyzes the transfer of the carbamoyl group from carbamoyl phosphate (CP) to the N(epsilon) atom of ornithine (ORN) to produce L-citrulline. The protein is Ornithine carbamoyltransferase, catabolic of Burkholderia pseudomallei (strain K96243).